The primary structure comprises 215 residues: FMN-dependent NADH:quinone oxidoreductase 1 (215 aa).

It belongs to the azoreductase type 1 family. As to quaternary structure, homodimer. FMN serves as cofactor.

It catalyses the reaction 2 a quinone + NADH + H(+) = 2 a 1,4-benzosemiquinone + NAD(+). The catalysed reaction is N,N-dimethyl-1,4-phenylenediamine + anthranilate + 2 NAD(+) = 2-(4-dimethylaminophenyl)diazenylbenzoate + 2 NADH + 2 H(+). Its function is as follows. Quinone reductase that provides resistance to thiol-specific stress caused by electrophilic quinones. Also exhibits azoreductase activity. Catalyzes the reductive cleavage of the azo bond in aromatic azo compounds to the corresponding amines. The sequence is that of FMN-dependent NADH:quinone oxidoreductase 1 from Lactiplantibacillus plantarum (strain ATCC BAA-793 / NCIMB 8826 / WCFS1) (Lactobacillus plantarum).